The chain runs to 421 residues: Lipid II:glycine glycyltransferase (421 aa).

Belongs to the FemABX family. In terms of assembly, monomer.

The protein resides in the cytoplasm. The catalysed reaction is beta-D-GlcNAc-(1-&gt;4)-Mur2Ac(oyl-L-Ala-D-isoglutaminyl-L-Lys-D-Ala-D-Ala)-di-trans,octa-cis-undecaprenyl diphosphate + glycyl-tRNA(Gly) = beta-D-GlcNAc-(1-&gt;4)-Mur2Ac(oyl-L-Ala-D-isoglutaminyl-L-Lys-(N(6)-Gly)-D-Ala-D-Ala)-di-trans,octa-cis-undecaprenyl diphosphate + tRNA(Gly) + H(+). In terms of biological role, catalyzes the incorporation of the first glycine of the pentaglycine interpeptide bridge, which is characteristic of the S.aureus peptidoglycan. This glycine is added to the epsilon-amino group of the L-lysine of the membrane-bound lipid II intermediate (GlcNAc-(beta-1,4)-N-acetylmuramic acid(-L-Ala-D-iGln-L-Lys-D-Ala-D-Ala)-pyrophosphoryl-undecaprenol), using glycyl-tRNA(Gly) as donor, in a ribosome-independent mechanism. Involved in methicillin resistance. The sequence is that of Lipid II:glycine glycyltransferase (femX) from Staphylococcus aureus (strain MRSA252).